The primary structure comprises 179 residues: UPF0227 protein Shewmr7_1806 (179 aa).

This sequence belongs to the UPF0227 family.

This Shewanella sp. (strain MR-7) protein is UPF0227 protein Shewmr7_1806.